The primary structure comprises 115 residues: Peptidyl-tRNA hydrolase (115 aa).

This sequence belongs to the PTH2 family.

The protein localises to the cytoplasm. The catalysed reaction is an N-acyl-L-alpha-aminoacyl-tRNA + H2O = an N-acyl-L-amino acid + a tRNA + H(+). In terms of biological role, the natural substrate for this enzyme may be peptidyl-tRNAs which drop off the ribosome during protein synthesis. The chain is Peptidyl-tRNA hydrolase from Methanosarcina acetivorans (strain ATCC 35395 / DSM 2834 / JCM 12185 / C2A).